The chain runs to 428 residues: Immunoglobulin superfamily containing leucine-rich repeat protein (428 aa).

The first 18 residues, 1–18, serve as a signal peptide directing secretion; the sequence is MRALCLLCWAVLLNLVRA. The LRRNT domain occupies 19–50; sequence CPEPCDCGEKYGFQIADCAYRDLEGVPPGFPA. Asn-51 carries an N-linked (GlcNAc...) asparagine glycan. 5 LRR repeats span residues 51–72, 75–98, 99–122, 123–144, and 147–168; these read NVTT…AFRE, LLQS…APLS, HLKS…HNLS, ALQL…AFSS, and ALRS…TFAP. Positions 180–231 constitute an LRRCT domain; it reads NPFDCTCGIVWFKTWALASAVSIPEQDNIACTTPHVLKGIPLGRLPPLPCSA. The 112-residue stretch at 232–343 folds into the Ig-like domain; the sequence is PSVQLSYQPS…GSAESSVNVA (112 aa). Cys-257 and Cys-327 are joined by a disulfide. N-linked (GlcNAc...) asparagine glycosylation occurs at Asn-309.

In terms of tissue distribution, detected in thyroid, heart, retina and spinal cord.

Its subcellular location is the secreted. The polypeptide is Immunoglobulin superfamily containing leucine-rich repeat protein (Islr) (Mus musculus (Mouse)).